A 244-amino-acid chain; its full sequence is MFKAELSDSSILKTSFDAISSIVDEVQIQTDSEGMRLDALDRSHITFVHLELKASLFDEYVCDVPEKINIDTGEFMSVLKRAKSQDRVIMSLDEGNFIITFEGDATRTFKIRLIDIEYDNPTPPELEHPASFKVHFGILKDAINDIDIFSDKIALQVDEDYFRASADGEFGDASVKYLHGENINTQEKSLFSLDKIREMLKADKFSEEAEIGLGTDMPLKLTLNMVTGDGKLSFLLAPRLESDE.

Belongs to the PCNA family. In terms of assembly, homotrimer. The subunits circularize to form a toroid; DNA passes through its center. Replication factor C (RFC) is required to load the toroid on the DNA.

In terms of biological role, sliding clamp subunit that acts as a moving platform for DNA processing. Responsible for tethering the catalytic subunit of DNA polymerase and other proteins to DNA during high-speed replication. The polypeptide is DNA polymerase sliding clamp (Methanobrevibacter smithii (strain ATCC 35061 / DSM 861 / OCM 144 / PS)).